A 185-amino-acid polypeptide reads, in one-letter code: Mitochondrial inner membrane protease atp23 (185 aa).

H86 provides a ligand contact to a divalent metal cation. E87 is an active-site residue. Residue H90 coordinates a divalent metal cation.

Belongs to the peptidase M76 family.

The protein resides in the mitochondrion inner membrane. Functionally, has a dual role in the assembly of mitochondrial ATPase. Acts as a protease that removes N-terminal residues of mitochondrial ATPase CF(0) subunit 6 at the intermembrane space side. Also involved in the correct assembly of the membrane-embedded ATPase CF(0) particle, probably mediating association of subunit 6 with the subunit 9 ring. The polypeptide is Mitochondrial inner membrane protease atp23 (atp23) (Schizosaccharomyces pombe (strain 972 / ATCC 24843) (Fission yeast)).